Reading from the N-terminus, the 435-residue chain is GPI-anchor transamidase component PIGU (435 aa).

Residues 1–3 (MAA) are Cytoplasmic-facing. Residues 4–22 (PLALVLVVAVTVRAALFRS) form a helical membrane-spanning segment. Over 23–78 (SLAEFISERVEVVSPLSSWKRVVEGLSLLDLGVSPYSGAVFHETPLIIYLFHFLID) the chain is Lumenal. The chain crosses the membrane as a helical span at residues 79 to 99 (YAELVFMITDALTAIALYFAI). At 100 to 136 (QDFNKVVFKKQKLLLELDQYAPDVAELIRTPMEMRYI) the chain is on the cytoplasmic side. 4 helical membrane passes run 137–158 (PLKV…VAKS), 159–178 (TCAI…IKGS), 179–194 (VFLS…YQTL), and 195–205 (YPVTLFAPGLL). Over 206–222 (YLLQRQYIPVKVKSKAF) the chain is Cytoplasmic. Residue lysine 216 participates in a cardiolipin binding. Residues 223-244 (WIFSWEYAMMYIGSLVVIVCLS) form a helical membrane-spanning segment. The Lumenal portion of the chain corresponds to 245 to 286 (FFLLSSWDFIPAVYGFILSVPDLTPNIGLFWYFFAEMFEHFS). The chain crosses the membrane as a helical span at residues 287-306 (LFFVCVFQINVFFYTVPLAI). The Cytoplasmic portion of the chain corresponds to 307-311 (KLKEH). Residue lysine 309 coordinates a cardiolipin. A run of 2 helical transmembrane segments spans residues 312–331 (PIFF…SYPT) and 332–345 (VGDV…FPVW). Topologically, residues 346 to 354 (NHLYRFLRN) are cytoplasmic. Residues 355–372 (VFVLTCIIVVCSLLFPVL) form a helical membrane-spanning segment. Residues 373–384 (WHLWIYAGSANS) are Lumenal-facing. A 2-acyl-6-[6-phosphoethanolamine-alpha-D-mannosyl-(1-&gt;2)-6-phosphoethanolamine-alpha-D-mannosyl-(1-&gt;6)-2-phosphoethanolamine-alpha-D-mannosyl-(1-&gt;4)-alpha-D-glucosaminyl]-1-(1-radyl,2-acyl-sn-glycero-3-phospho)-1D-myo-inositol-binding residues include asparagine 383 and asparagine 385. Residues 385–406 (NFFYAITLTFNVGQILLISDYF) form a helical membrane-spanning segment. Residues 407–435 (YAFLRREYYLTHGLYLTAKDGTEAMLVLK) are Cytoplasmic-facing.

The protein belongs to the PIGU family. In terms of assembly, heteropentamer. Part of the GPI-anchor transamidase complex, consisting of PIGK, PIGT, PIGS, PIGU and GAA1.

Its subcellular location is the endoplasmic reticulum membrane. It functions in the pathway glycolipid biosynthesis; glycosylphosphatidylinositol-anchor biosynthesis. In terms of biological role, component of the glycosylphosphatidylinositol-anchor (GPI-anchor) transamidase (GPI-T) complex that catalyzes the formation of the linkage between a proprotein and a GPI-anchor and participates in GPI anchored protein biosynthesis. Binds the lipid portion of GPI-anchor. May act as an organizer in the transmembrane layer to recruit other subunits, and thus is essential for assembly of the complex. The polypeptide is GPI-anchor transamidase component PIGU (Cricetulus griseus (Chinese hamster)).